A 1106-amino-acid chain; its full sequence is Carbamoyl phosphate synthase large chain (1106 aa).

Residues 1–401 (MPKRNDLNKV…AFLKALRSLE (401 aa)) are carboxyphosphate synthetic domain. Residues Arg-129, Arg-169, Gly-175, Gly-176, Arg-208, Val-210, Glu-215, Gly-241, Val-242, His-243, Gln-284, and Glu-298 each coordinate ATP. Residues 133-327 (KTTMNDIGEP…IARVASKIAI (195 aa)) form the ATP-grasp 1 domain. 3 residues coordinate Mg(2+): Gln-284, Glu-298, and Asn-300. Mn(2+)-binding residues include Gln-284, Glu-298, and Asn-300. The tract at residues 402-577 (IDLDDLHQSI…YSAYNEENEA (176 aa)) is oligomerization domain. The segment at 578–964 (IPPSEPTHDK…ALYKAMLASG (387 aa)) is carbamoyl phosphate synthetic domain. Positions 706–896 (DQLLNKLGID…MVKIATKAMM (191 aa)) constitute an ATP-grasp 2 domain. 10 residues coordinate ATP: Arg-742, Gln-781, Leu-783, Glu-787, Gly-812, Val-813, His-814, Ser-815, Gln-855, and Glu-867. 3 residues coordinate Mg(2+): Gln-855, Glu-867, and Asn-869. The Mn(2+) site is built by Gln-855, Glu-867, and Asn-869. An MGS-like domain is found at 965 to 1106 (FSINLNGGVL…LQDYLKELSN (142 aa)). The allosteric domain stretch occupies residues 965 to 1106 (FSINLNGGVL…LQDYLKELSN (142 aa)).

This sequence belongs to the CarB family. As to quaternary structure, composed of two chains; the small (or glutamine) chain promotes the hydrolysis of glutamine to ammonia, which is used by the large (or ammonia) chain to synthesize carbamoyl phosphate. Tetramer of heterodimers (alpha,beta)4. It depends on Mg(2+) as a cofactor. The cofactor is Mn(2+).

The enzyme catalyses hydrogencarbonate + L-glutamine + 2 ATP + H2O = carbamoyl phosphate + L-glutamate + 2 ADP + phosphate + 2 H(+). The catalysed reaction is hydrogencarbonate + NH4(+) + 2 ATP = carbamoyl phosphate + 2 ADP + phosphate + 2 H(+). It functions in the pathway amino-acid biosynthesis; L-arginine biosynthesis; carbamoyl phosphate from bicarbonate: step 1/1. The protein operates within pyrimidine metabolism; UMP biosynthesis via de novo pathway; (S)-dihydroorotate from bicarbonate: step 1/3. Large subunit of the glutamine-dependent carbamoyl phosphate synthetase (CPSase). CPSase catalyzes the formation of carbamoyl phosphate from the ammonia moiety of glutamine, carbonate, and phosphate donated by ATP, constituting the first step of 2 biosynthetic pathways, one leading to arginine and/or urea and the other to pyrimidine nucleotides. The large subunit (synthetase) binds the substrates ammonia (free or transferred from glutamine from the small subunit), hydrogencarbonate and ATP and carries out an ATP-coupled ligase reaction, activating hydrogencarbonate by forming carboxy phosphate which reacts with ammonia to form carbamoyl phosphate. The protein is Carbamoyl phosphate synthase large chain of Natranaerobius thermophilus (strain ATCC BAA-1301 / DSM 18059 / JW/NM-WN-LF).